The sequence spans 1857 residues: MEQLTTLPRPGDPGAMEPWALPTWHSWTPGRGGEPSSAAPSIADTPPAALQLQELRSEESSKPKGDGSSRPVGGTDPEGAEACLPSLGQQASSSGPACQRPEDEEVEAFLKAKLNMSFGDRPNLELLRALGELRQRCAILKEENQMLRKSSFPETEEKVRRLKRKNAELAVIAKRLEERARKLQETNLRVVSAPLPRPGTSLELCRKALARQRARDLSETASALLAKDKQIAALQRECRELQARLTLVGKEGPQWLHVRDFDRLLRESQREVLRLQRQIALRNQRETLPLPPSWPPGPALQARAGAPAPGAPGEATPQEDADNLPVILGEPEKEQRVQQLESELSKKRKKCESLEQEARKKQRRCEELELQLRQAQNENARLVEENSRLSGRATEKEQVEWENAELRGQLLGVTQERDSALRKSQGLQSKLESLEQVLKHMREVAQRRQQLEVEHEQARLSLREKQEEVRRLQQAQAEAQREHEGAVQLLESTLDSMQARVRELEEQCRSQTEQFSLLAQELQAFRLHPGPLDLLTSALDCGSLGDCPPPPCCCSIPQPCRGSGPKDLDLPPGSPGRCTPKSSEPAPATLTGVPRRTAKKAESLSNSSHSESIHNSPKSCPTPEVDTASEVEELEADSVSLLPAAPEGSRGGARIQVFLARYSYNPFEGPNENPEAELPLTAGEYIYIYGNMDEDGFFEGELMDGRRGLVPSNFVERVSDDDLLTSLPPELADLSHSSGPELSFLSVGGGGSSSGGQSSVGRSQPRPEEEDAGDELSLSPSPEGLGEPPAVPYPRRLVVLKQLAHSVVLAWEPPPEQVELHGFHICVNGELRQALGPGAPPKAVLENLDLWAGPLHISVQALTSRGSSDPLRCCLAVGARAGVVPSQLRVHRLTATSAEITWVPGNSNLAHAIYLNGEECPPASPSTYWATFCHLRPGTPYQAQVEAQLPPQGPWEPGWERLEQRAATLQFTTLPAGPPDAPLDVQIEPGPSPGILIISWLPVTIDAAGTSNGVRVTGYAIYADGQKIMEVASPTAGSVLVELSQLQLLQVCREVVVRTMSPHGESADSIPAPITPALAPASLPARVSCPSPHPSPEARAPLASASPGPGDPSSPLQHPAPLGTQEPPGAPPASPSREMAKGSHEDPPAPCSQEEAGAAVLGTSEERTASTSTLGEKDPGPAAPSLAKQEAEWTAGEACPASSSTQGARAQQAPNTEMCQGGDPGSGLRPRAEKEDTAELGVHLVNSLVDHGRNSDLSDIQEEEEEEEEEEEEELGSRTCSFQKQVAGNSIRENGAKSQPDPFCETDSDEEILEQILELPLQQFCSKKLFSIPEEEEEEEEDEEEEKSGAGCSSRDPGPPEPALLGLGCDSGQPRRPGQCPLSPESSRAGDCLEDMPGLVGGSSRRRGGGSPEKPPSRRRPPDPREHCSRLLSNNGPQASGRLGPTRERGGLPVIEGPRTGLEASGRGRLGPSRRCSRGRALEPGLASCLSPKCLEISIEYDSEDEQEAGSGGISITSSCYPGDGEAWGTATVGRPRGPPKANSGPKPYPRLPAWEKGEPERRGRSATGRAKEPLSRATETGEARGQDGSGRRGPQKRGVRVLRPSTAELVPARSPSETLAYQHLPVRIFVALFDYDPVSMSPNPDAGEEELPFREGQILKVFGDKDADGFYQGEGGGRTGYIPCNMVAEVAVDSPAGRQQLLQRGYLSPDILLEGSGNGPFVYSTAHTTGPPPKPRRSKKAESEGPAQPCPGPPKLVPSADLKAPHSMVAAFDYNPQESSPNMDVEAELPFRAGDVITVFGGMDDDGFYYGELNGQRGLVPSNFLEGPGPEAGGLDREPRTPQAESQRTRRRRVQC.

Disordered regions lie at residues 1–103, 284–321, and 565–629; these read MEQL…RPED, QRET…QEDA, and PKDL…DTAS. Positions 55–67 are enriched in basic and acidic residues; that stretch reads LRSEESSKPKGDG. A compositionally biased stretch (polar residues) spans 87–96; that stretch reads LGQQASSSGP. The segment covering 289–298 has biased composition (pro residues); the sequence is PLPPSWPPGP. 2 stretches are compositionally biased toward low complexity: residues 299-316 and 603-616; these read ALQA…GEAT and SLSN…IHNS. The SH3 1 domain occupies 653–720; the sequence is ARIQVFLARY…PSNFVERVSD (68 aa). Positions 729 to 789 are disordered; that stretch reads PELADLSHSS…PSPEGLGEPP (61 aa). The span at 755 to 764 shows a compositional bias: low complexity; that stretch reads GGQSSVGRSQ. 3 Fibronectin type-III domains span residues 791-882, 884-976, and 981-1081; these read VPYP…ARAG, VPSQ…TLPA, and APLD…LAPA. Disordered regions lie at residues 1083–1311, 1330–1479, and 1501–1601; these read LPAR…SDEE, FSIP…CSRG, and YDSE…RGVR. Residues 1098-1116 are compositionally biased toward low complexity; sequence ARAPLASASPGPGDPSSPL. The segment covering 1138-1147 has biased composition (basic and acidic residues); that stretch reads EMAKGSHEDP. Residues 1201–1218 show a composition bias toward polar residues; sequence ASSSTQGARAQQAPNTEM. Over residues 1259–1274 the composition is skewed to acidic residues; the sequence is DIQEEEEEEEEEEEEE. Over residues 1278–1292 the composition is skewed to polar residues; it reads RTCSFQKQVAGNSIR. Residues 1333–1346 are compositionally biased toward acidic residues; it reads PEEEEEEEEDEEEE. Composition is skewed to basic and acidic residues over residues 1420–1429 and 1554–1586; these read RPPDPREHCS and AWEK…EARG. The SH3 2 domain occupies 1625-1693; sequence LPVRIFVALF…PCNMVAEVAV (69 aa). 2 disordered regions span residues 1723–1761 and 1823–1857; these read VYST…VPSA and SNFL…RVQC. An SH3 3 domain is found at 1764–1831; the sequence is KAPHSMVAAF…PSNFLEGPGP (68 aa).

This sequence belongs to the RIMBP family. Interacts with RIMS1 and RIMS2. Interacts with TSPO. Interacts with CACNA1A. Predominantly expressed in brain, pituitary gland and thymus in adults. In adult brain, highest expression found in temporal lobe and the putamen, followed by amygdala, caudate nucleus, cerebral cortex, occipital and frontal lobe. A high expression level is also observed in fetal tissues like brain, heart, kidney and thymus.

Its subcellular location is the cytoplasm. The protein resides in the mitochondrion. Functionally, required for synaptic transmission regulation. It probably controls the recruitement of voltage-gated calcium channels to the presynaptic membrane, and modulates neurotransmitter release. The protein is Peripheral-type benzodiazepine receptor-associated protein 1 of Homo sapiens (Human).